Consider the following 89-residue polypeptide: Small ribosomal subunit protein uS15 (89 aa).

It belongs to the universal ribosomal protein uS15 family. In terms of assembly, part of the 30S ribosomal subunit. Forms a bridge to the 50S subunit in the 70S ribosome, contacting the 23S rRNA.

Functionally, one of the primary rRNA binding proteins, it binds directly to 16S rRNA where it helps nucleate assembly of the platform of the 30S subunit by binding and bridging several RNA helices of the 16S rRNA. In terms of biological role, forms an intersubunit bridge (bridge B4) with the 23S rRNA of the 50S subunit in the ribosome. This is Small ribosomal subunit protein uS15 from Mycobacteroides abscessus (strain ATCC 19977 / DSM 44196 / CCUG 20993 / CIP 104536 / JCM 13569 / NCTC 13031 / TMC 1543 / L948) (Mycobacterium abscessus).